Consider the following 460-residue polypeptide: Phosphoglucomutase (460 aa).

The active-site Phosphoserine intermediate is Ser103. A Mg(2+)-binding site is contributed by Ser103. Residues 103–104 and Lys113 contribute to the substrate site; that span reads SH. Positions 239, 241, and 243 each coordinate Mg(2+). Substrate is bound by residues 243–244, Thr303, and 322–324; these read DR and EMS.

Belongs to the phosphohexose mutase family. Mg(2+) is required as a cofactor.

Its subcellular location is the cytoplasm. It catalyses the reaction alpha-D-glucose 1-phosphate = alpha-D-glucose 6-phosphate. This enzyme participates in both the breakdown and synthesis of glucose. The sequence is that of Phosphoglucomutase (pgm) from Neisseria gonorrhoeae.